The chain runs to 305 residues: DNA-directed RNA polymerase 35 kDa subunit (305 aa).

It belongs to the poxviridae DNA-directed RNA polymerase 35 kDa subunit family. As to quaternary structure, the DNA-dependent RNA polymerase used for intermediate and late genes expression consists of eight subunits 147 kDa, 133 kDa, 35 kDa, 30 kDa, 22 kDa, 19 kDa, 18 kDa and 7 kDa totalling more than 500 kDa in mass. The same holoenzyme, with the addition of the transcription-specificity factor RAP94, is used for early gene expression.

The protein localises to the virion. The catalysed reaction is RNA(n) + a ribonucleoside 5'-triphosphate = RNA(n+1) + diphosphate. Functionally, part of the DNA-dependent RNA polymerase which catalyzes the transcription of viral DNA into RNA using the four ribonucleoside triphosphates as substrates. Responsible for the transcription of early, intermediate and late genes. DNA-dependent RNA polymerase associates with the early transcription factor (ETF), itself composed of D6 and A7, thereby allowing the early genes transcription. Late transcription, and probably also intermediate transcription, require newly synthesized RNA polymerase. The polypeptide is DNA-directed RNA polymerase 35 kDa subunit (RPO35) (Homo sapiens (Human)).